A 1061-amino-acid chain; its full sequence is Carbamoyl phosphate synthase large chain (1061 aa).

Residues 1–401 (MPKRTDVHKI…ALQKAVRSLE (401 aa)) form a carboxyphosphate synthetic domain region. ATP contacts are provided by Arg-129, Arg-169, Gly-175, Gly-176, Lys-208, Ile-210, Glu-215, Gly-241, Ile-242, His-243, Gln-284, and Glu-298. Positions 133 to 327 (KDLMQELNEP…IAKLAAKIAV (195 aa)) constitute an ATP-grasp 1 domain. The Mg(2+) site is built by Gln-284, Glu-298, and Asn-300. Positions 284, 298, and 300 each coordinate Mn(2+). Residues 402–546 (IDEKDLISAK…YSSYDLENES (145 aa)) form an oligomerization domain region. The interval 547–929 (KKSDKKSVLV…ALYKAFTGAK (383 aa)) is carbamoyl phosphate synthetic domain. Positions 671 to 861 (DQTIKNLGLK…MAQVATRVIL (191 aa)) constitute an ATP-grasp 2 domain. 10 residues coordinate ATP: Arg-707, Ala-746, Leu-748, Glu-752, Gly-777, Val-778, His-779, Ser-780, Gln-820, and Glu-832. Gln-820, Glu-832, and Asn-834 together coordinate Mg(2+). Gln-820, Glu-832, and Asn-834 together coordinate Mn(2+). One can recognise an MGS-like domain in the interval 930-1061 (MELPDNGNVL…ENRSFATNSL (132 aa)). Positions 930-1061 (MELPDNGNVL…ENRSFATNSL (132 aa)) are allosteric domain.

Belongs to the CarB family. In terms of assembly, composed of two chains; the small (or glutamine) chain promotes the hydrolysis of glutamine to ammonia, which is used by the large (or ammonia) chain to synthesize carbamoyl phosphate. Tetramer of heterodimers (alpha,beta)4. Mg(2+) is required as a cofactor. The cofactor is Mn(2+).

It catalyses the reaction hydrogencarbonate + L-glutamine + 2 ATP + H2O = carbamoyl phosphate + L-glutamate + 2 ADP + phosphate + 2 H(+). The catalysed reaction is hydrogencarbonate + NH4(+) + 2 ATP = carbamoyl phosphate + 2 ADP + phosphate + 2 H(+). The protein operates within amino-acid biosynthesis; L-arginine biosynthesis; carbamoyl phosphate from bicarbonate: step 1/1. It participates in pyrimidine metabolism; UMP biosynthesis via de novo pathway; (S)-dihydroorotate from bicarbonate: step 1/3. In terms of biological role, large subunit of the glutamine-dependent carbamoyl phosphate synthetase (CPSase). CPSase catalyzes the formation of carbamoyl phosphate from the ammonia moiety of glutamine, carbonate, and phosphate donated by ATP, constituting the first step of 2 biosynthetic pathways, one leading to arginine and/or urea and the other to pyrimidine nucleotides. The large subunit (synthetase) binds the substrates ammonia (free or transferred from glutamine from the small subunit), hydrogencarbonate and ATP and carries out an ATP-coupled ligase reaction, activating hydrogencarbonate by forming carboxy phosphate which reacts with ammonia to form carbamoyl phosphate. The protein is Carbamoyl phosphate synthase large chain of Ligilactobacillus salivarius (strain UCC118) (Lactobacillus salivarius).